Reading from the N-terminus, the 346-residue chain is MQKTIRSQALIYRKFGDPLKVLQLETVEVPAEPGSGECLVEWLASPINPLDINRIQGNYAVRAELPVIGGSEGVGRVVKAGSGSRFKSGDHVTIFSANTPIWTEFGVVDDDELVKLDNRIPLDLAATLMINPPTAWIMLKKYVNLQKGDYIIQNSANSGVGRSVIEMCKALGYKSINIVRNRQNIEALKTDLWRIGADHVFTEEEFKGTSRQFLKSINVRPKLALNGVGGKSALQISSVLERGGTCVTYGGMSKKAHEFTTSALVFNDICVRGVAVGMWARQEEHLDEWNLCVDEVQKLAVAGKITAIPMEKVVLADHKTAIQKSLEGRSIKQLFVINSKASASHI.

The N-terminal 22 residues, 1-22, are a transit peptide targeting the mitochondrion; that stretch reads MQKTIRSQALIYRKFGDPLKVL. Tyr-59 functions as the Proton donor in the catalytic mechanism. NADP(+) is bound by residues Asn-131, 157–160, 180–182, 249–252, 274–276, and Lys-332; these read NSGV, RNR, YGGM, and VAV.

This sequence belongs to the zinc-containing alcohol dehydrogenase family. Quinone oxidoreductase subfamily. In terms of assembly, homodimer.

It is found in the mitochondrion. It carries out the reaction a 2,3-saturated acyl-[ACP] + NADP(+) = a (2E)-enoyl-[ACP] + NADPH + H(+). Its function is as follows. Catalyzes the NADPH-dependent reduction of trans-2-enoyl thioesters in mitochondrial fatty acid synthesis (fatty acid synthesis type II). Fatty acid chain elongation in mitochondria uses acyl carrier protein (ACP) as an acyl group carrier, but the enzyme accepts both ACP and CoA thioesters as substrates in vitro. May provide the octanoyl chain used for lipoic acid biosynthesis, regulating protein lipoylation and mitochondrial respiratory activity. Involved in iron homeostasis; affecting Fe-S cluster assembly and ceramide metabolism. Required for proper morphology and bioenergetic functions of mitochondria. Required for maintenance of neurons. The chain is Enoyl-[acyl-carrier-protein] reductase, mitochondrial from Caenorhabditis elegans.